A 431-amino-acid polypeptide reads, in one-letter code: Adenylosuccinate synthetase (431 aa).

GTP-binding positions include G13–K19 and G41–T43. Catalysis depends on D14, which acts as the Proton acceptor. Mg(2+) contacts are provided by D14 and G41. Residues D14–K17, N39–H42, T130, R144, Q225, T240, and R304 each bind IMP. H42 (proton donor) is an active-site residue. A300–R306 provides a ligand contact to substrate. GTP is bound by residues R306, K332–D334, and S415–G417.

The protein belongs to the adenylosuccinate synthetase family. Homodimer. The cofactor is Mg(2+).

The protein resides in the cytoplasm. It carries out the reaction IMP + L-aspartate + GTP = N(6)-(1,2-dicarboxyethyl)-AMP + GDP + phosphate + 2 H(+). Its pathway is purine metabolism; AMP biosynthesis via de novo pathway; AMP from IMP: step 1/2. In terms of biological role, plays an important role in the de novo pathway of purine nucleotide biosynthesis. Catalyzes the first committed step in the biosynthesis of AMP from IMP. This Shewanella amazonensis (strain ATCC BAA-1098 / SB2B) protein is Adenylosuccinate synthetase.